The following is a 288-amino-acid chain: Protoheme IX farnesyltransferase (288 aa).

9 consecutive transmembrane segments (helical) span residues 16 to 36, 37 to 57, 88 to 108, 111 to 131, 138 to 158, 162 to 182, 210 to 230, 236 to 256, and 265 to 285; these read VWSL…PYFN, LHYI…SMGA, INGL…LAAF, LYAA…YSYL, WNII…WYTV, FSIL…IHVW, AICI…PAFF, VYMI…IVFV, and LKLF…VLIF.

It belongs to the UbiA prenyltransferase family. Protoheme IX farnesyltransferase subfamily.

It is found in the cell membrane. It catalyses the reaction heme b + (2E,6E)-farnesyl diphosphate + H2O = Fe(II)-heme o + diphosphate. Its pathway is porphyrin-containing compound metabolism; heme O biosynthesis; heme O from protoheme: step 1/1. Functionally, converts heme B (protoheme IX) to heme O by substitution of the vinyl group on carbon 2 of heme B porphyrin ring with a hydroxyethyl farnesyl side group. In Thermoplasma acidophilum (strain ATCC 25905 / DSM 1728 / JCM 9062 / NBRC 15155 / AMRC-C165), this protein is Protoheme IX farnesyltransferase.